The following is a 167-amino-acid chain: Dual specificity protein phosphatase 1B (167 aa).

A Tyrosine-protein phosphatase domain is found at 24–165; that stretch reads DLSEIQQGLF…LQQFEKSIQG (142 aa). The Phosphocysteine intermediate role is filled by C109.

It belongs to the protein-tyrosine phosphatase family. Non-receptor class dual specificity subfamily. Associates with MPK3 and MPK6. Interacts with MPK6 is promoted during HR-like responses triggered by fungal elicitors, whereas interaction with MPK3 in repressed. Expressed in flowers, seedlings, roots, leaves, and seeds. Present in stomata and meristematic cells.

Its subcellular location is the nucleus. The protein localises to the cytoplasm. It carries out the reaction O-phospho-L-tyrosyl-[protein] + H2O = L-tyrosyl-[protein] + phosphate. The catalysed reaction is O-phospho-L-seryl-[protein] + H2O = L-seryl-[protein] + phosphate. It catalyses the reaction O-phospho-L-threonyl-[protein] + H2O = L-threonyl-[protein] + phosphate. Its function is as follows. Has a dual specificity toward Ser/Thr and Tyr-containing proteins. Prevents biotic and abiotic stress responses, including ozone, oxidative stress and pathogen attacks; represses MAPK activities during hypersensitive response to limit the spread of the HR response after infection by necrotrophic pathogen such as Botrytis cinerea. May be also involved in ABA and salt responses. Dephosphorylates MPK3 and MPK6. The sequence is that of Dual specificity protein phosphatase 1B (DSPTP1B) from Arabidopsis thaliana (Mouse-ear cress).